Here is a 461-residue protein sequence, read N- to C-terminus: MPREIITCQVGQCGNQIGMEFWKQLCMEHGINPEGILEDFAVNGEDRKDVFFYQADDEHYVPRAVLIDLEPRVINGIQKSAYSSLYNPENIYIAKHGGGAGNNWGRGYTDAEKVQDEILEMIDREADGSDSLEGFVLTHSIAGGTGSGFGSYLLERLNDHYPKKLIQTYSVFPIENDVVVQPYNCLLSIKRLTLNADCVVVLDNNALTSIAVDRLKILQPTFSQINSIVSTVMAASTTTLRYPGYMNNDMVGLIASLVPTPRCHFLMTGYTPLSLDQKFTSVRKTTVLDVMRRLLQTKNIMVTGAVKKGAYMSILNVIQGDVDPTQVHKSLQRIRERKLANFIPWGPASIQVALSKKSPYIDSGHKVSGLMLANHTGIRSIFKVLYDQYRTFRKRDAYMNIFKQTKIFEDNLDEFDSSDEVVKSLIDEYAAAEKMDYINWGSDDDDMQFDPREPPKFSNIQ.

142 to 148 (AGGTGSG) lines the GTP pocket.

This sequence belongs to the tubulin family.

It localises to the cytoplasm. The protein resides in the cytoskeleton. It is found in the microtubule organizing center. The protein localises to the centrosome. In terms of biological role, tubulin is the major constituent of microtubules. The gamma chain is found at microtubule organizing centers (MTOC) such as the spindle poles or the centrosome, suggesting that it is involved in the minus-end nucleation of microtubule assembly. This chain is Tubulin gamma-2 chain, found in Euplotoides octocarinatus (Freshwater ciliate).